Reading from the N-terminus, the 2237-residue chain is Activating signal cointegrator 1 complex subunit 3-like (2237 aa).

Disordered stretches follow at residues 1–48 (MSEE…RGEM), 71–118 (TIEK…KPID), 242–330 (DEEE…SKLI), and 445–472 (EKTIEKTESNKKDVEMKQQQQQQQDEIK). Basic and acidic residues predominate over residues 24-37 (ERNRSELKEPKGEP). The segment covering 79–97 (VNSSNDTYSTTKKVKNQNP) has biased composition (polar residues). Positions 105-114 (RKSNGNNNNE) are enriched in low complexity. The segment covering 242–282 (DEEEEEENLSDFEIRDDDDDDDDVDNNEVDDNNNNDSEAQD) has biased composition (acidic residues). Basic and acidic residues-rich tracts occupy residues 312–325 (QKPDTKNTKDDKNN) and 446–460 (KTIEKTESNKKDVEM). The stretch at 440–468 (TAATTEKTIEKTESNKKDVEMKQQQQQQQ) forms a coiled coil. The region spanning 561 to 745 (DCAFKTDNNL…FLRVEPDGVF (185 aa)) is the Helicase ATP-binding 1 domain. Residue 574 to 581 (APTSSGKT) participates in ATP binding. Positions 687–690 (DEIH) match the DEAH box motif. The region spanning 755-990 (PLEQQYIGIS…TVRDAVNWLG (236 aa)) is the Helicase C-terminal 1 domain. In terms of domain architecture, SEC63 1 spans 1050–1356 (STELGKVASH…GAEYSLPISF (307 aa)). Positions 1407-1584 (NCMYQSNDNA…WIGATPQTCY (178 aa)) constitute a Helicase ATP-binding 2 domain. Residue 1420-1427 (APTNSGKT) participates in ATP binding. Positions 1526 to 1529 (DELH) match the DEAH box motif. The Helicase C-terminal 2 domain occupies 1657 to 1832 (TLTKPYLVCE…TITKKQDALD (176 aa)). Positions 1892 to 2215 (PLNLGIIASY…GCDQEHELNI (324 aa)) constitute an SEC63 2 domain.

It belongs to the helicase family.

The sequence is that of Activating signal cointegrator 1 complex subunit 3-like (ascc3l) from Dictyostelium discoideum (Social amoeba).